A 273-amino-acid polypeptide reads, in one-letter code: Chlorophyll a-b binding protein 8, chloroplastic (273 aa).

The N-terminal 32 residues, 1-32, are a transit peptide targeting the chloroplast; it reads MATQALISSSSISTSAEAARQIIGSRISQSVT. Position 33 is an N2-acetylarginine (R33). Chlorophyll b is bound at residue W56. The chlorophyll a site is built by F76, S82, and E100. R105 is a chlorophyll b binding site. Residues 106 to 126 traverse the membrane as a helical segment; the sequence is FAMLGAAGAIAPEILGKAGLI. Residues I140, E167, and R170 each coordinate chlorophyll b. Positions 224, 225, 228, 230, 242, and 257 each coordinate chlorophyll a. A helical transmembrane segment spans residues 231-251; it reads LAMLAILGYFIQALVTGVGPY.

It belongs to the light-harvesting chlorophyll a/b-binding (LHC) protein family. In terms of assembly, the LHC complex consists of chlorophyll a-b binding proteins. The cofactor is Binds at least 14 chlorophylls (8 Chl-a and 6 Chl-b) and carotenoids such as lutein and neoxanthin.. In terms of processing, photoregulated by reversible phosphorylation of its threonine residues.

It localises to the plastid. It is found in the chloroplast thylakoid membrane. Its function is as follows. The light-harvesting complex (LHC) functions as a light receptor, it captures and delivers excitation energy to photosystems with which it is closely associated. The protein is Chlorophyll a-b binding protein 8, chloroplastic (CAB8) of Solanum lycopersicum (Tomato).